The following is a 126-amino-acid chain: Fluoride-specific ion channel FluC (126 aa).

Helical transmembrane passes span 3–23 (MILA…LTGV), 39–59 (TVNV…AHVW), 71–91 (VGVL…ALLV), and 101–121 (AYVA…LALI). The Na(+) site is built by Gly75 and Thr78.

Belongs to the fluoride channel Fluc/FEX (TC 1.A.43) family.

It is found in the cell inner membrane. It catalyses the reaction fluoride(in) = fluoride(out). Its activity is regulated as follows. Na(+) is not transported, but it plays an essential structural role and its presence is essential for fluoride channel function. Fluoride-specific ion channel. Important for reducing fluoride concentration in the cell, thus reducing its toxicity. The protein is Fluoride-specific ion channel FluC of Rhodospirillum centenum (strain ATCC 51521 / SW).